A 143-amino-acid polypeptide reads, in one-letter code: Mannitol-specific phosphotransferase enzyme IIA component (143 aa).

The region spanning 1–142 (MKLLKNNIYI…DKVLEFLAKH (142 aa)) is the PTS EIIA type-2 domain. The active-site Tele-phosphohistidine intermediate is the histidine 61. Position 61 is a phosphohistidine; by HPr (histidine 61).

It is found in the cytoplasm. The phosphoenolpyruvate-dependent sugar phosphotransferase system (sugar PTS), a major carbohydrate active transport system, catalyzes the phosphorylation of incoming sugar substrates concomitantly with their translocation across the cell membrane. The enzyme II CmtAB PTS system is involved in D-mannitol transport. This chain is Mannitol-specific phosphotransferase enzyme IIA component (mtlF), found in Mycoplasma pneumoniae (strain ATCC 29342 / M129 / Subtype 1) (Mycoplasmoides pneumoniae).